The chain runs to 98 residues: Small ribosomal subunit protein bS20 (98 aa).

Residues 1–12 (MAPRKPSKKVGP) are compositionally biased toward basic residues. Residues 1-31 (MAPRKPSKKVGPQKRPSAEKRVITSKKKQLR) form a disordered region.

The protein belongs to the bacterial ribosomal protein bS20 family.

Binds directly to 16S ribosomal RNA. In Chlamydia trachomatis serovar L2 (strain ATCC VR-902B / DSM 19102 / 434/Bu), this protein is Small ribosomal subunit protein bS20.